A 619-amino-acid chain; its full sequence is Manganese lipoxygenase (619 aa).

The N-terminal stretch at 1 to 16 is a signal peptide; it reads MRVLVWIAGLAPLAVA. Asn-32, Asn-42, Asn-62, Asn-86, Asn-164, and Asn-229 each carry an N-linked (GlcNAc...) asparagine glycan. A Lipoxygenase domain is found at 55-619; it reads TLPCEDGNST…PGNIPFYLSV (565 aa). Positions 298, 303, 483, and 487 each coordinate Mn(2+). 2 N-linked (GlcNAc...) asparagine glycosylation sites follow: Asn-515 and Asn-549. Val-619 is a binding site for Mn(2+).

Belongs to the lipoxygenase family. Manganese lipoxygenase subfamily. Requires Mn(2+) as cofactor.

The protein localises to the secreted. The catalysed reaction is (9Z,12Z)-octadecadienoate + O2 = (9S)-hydroperoxy-(10E,12Z)-octadecadienoate. It catalyses the reaction (9Z,12Z)-octadecadienoate + O2 = (11S)-hydroperoxy-(9Z,12Z)-octadecadienoate. The enzyme catalyses (9Z,12Z)-octadecadienoate + O2 = (13R)-hydroperoxy-(9Z,11E)-octadecadienoate. It carries out the reaction (9Z,12Z,15Z)-octadecatrienoate + O2 = (9S)-hydroperoxy-(10E,12Z,15Z)-octadecatrienoate. The catalysed reaction is (9Z,12Z,15Z)-octadecatrienoate + O2 = (11R)-hydroperoxy-(9Z,12Z,15Z)-octadecatrienoate. It catalyses the reaction (9Z,12Z,15Z)-octadecatrienoate + O2 = (13R)-hydroperoxy-(9Z,11E,15Z)-octadecatrienoate. The enzyme catalyses (9S)-hydroperoxy-(10E,12Z,15Z)-octadecatrienoate + O2 = (9S,16S)-dihydroperoxy-(10E,12Z,14E)-octadecatrienoate. Lipoxygenase that metabolizes linoleic and alpha-linolenic acids to 9S-, 11- and 13R-hydroperoxy fatty acids. At the end of lipoxygenation, the intermediate product 11S-HPODE from linoleic acid is then transformed into 9S-HPODE and 13R-HPODE as the final products. The intermediate product 11R-HPOTrE from alpha-linolenic acid is transformed into 9S-HPOTrE and 13R-HPOTrE as the final products. 9S-HPOTrE is further oxidized by the enzyme to 9S,16S-DiHPOTrE as the end product. The polypeptide is Manganese lipoxygenase (Pyricularia oryzae (strain 70-15 / ATCC MYA-4617 / FGSC 8958) (Rice blast fungus)).